Here is a 249-residue protein sequence, read N- to C-terminus: Tryptophan synthase alpha chain (249 aa).

Active-site proton acceptor residues include E43 and D54.

It belongs to the TrpA family. As to quaternary structure, tetramer of two alpha and two beta chains.

It carries out the reaction (1S,2R)-1-C-(indol-3-yl)glycerol 3-phosphate + L-serine = D-glyceraldehyde 3-phosphate + L-tryptophan + H2O. The protein operates within amino-acid biosynthesis; L-tryptophan biosynthesis; L-tryptophan from chorismate: step 5/5. The alpha subunit is responsible for the aldol cleavage of indoleglycerol phosphate to indole and glyceraldehyde 3-phosphate. In Campylobacter jejuni subsp. doylei (strain ATCC BAA-1458 / RM4099 / 269.97), this protein is Tryptophan synthase alpha chain.